The chain runs to 2442 residues: Histone lysine acetyltransferase CREBBP (2442 aa).

Disordered stretches follow at residues 1-40 (MAENLLDGPPNPKRAKLSSPGFSANDSTDFGSLFDLENDL) and 74-168 (RGGS…PATS). Position 2 is an N-acetylalanine (A2). Polar residues predominate over residues 20 to 30 (PGFSANDSTDF). A Phosphoserine modification is found at S120. Residues 125 to 168 (GDSSTPSLPKQAASTSGPTPPASQALNPQAQKQVGLVTSSPATS) are compositionally biased toward polar residues. R219 carries the post-translational modification Omega-N-methylarginine. The interval 226 to 409 (PAPAMQGATS…GKACQVAHCA (184 aa)) is interaction with SRCAP. Over residues 261 to 272 (GGMTKMGMTGNT) the composition is skewed to low complexity. The segment at 261 to 290 (GGMTKMGMTGNTSPFGQPFSQTGGQPMGAT) is disordered. Positions 273–284 (SPFGQPFSQTGG) are enriched in polar residues. A TAZ-type 1 zinc finger spans residues 346–432 (DPEKRKLIQQ…RHDCPVCLPL (87 aa)). Residues H362, C366, C379, C384, H393, C397, C403, C408, H417, C421, C426, and C429 each coordinate Zn(2+). Positions 586–665 (GVRKGWHEHV…KIYKIQKELE (80 aa)) constitute a KIX domain. An asymmetric dimethylarginine mark is found at R600 and R624. The residue at position 656 (K656) is an N6-acetyllysine. Residues 792–825 (FLPQNQFPSSSGAMSVNSVGMGQPATQAGVSQGQ) are compositionally biased toward polar residues. Residues 792–1084 (FLPQNQFPSS…STSPSQPRKK (293 aa)) form a disordered region. 2 stretches are compositionally biased toward pro residues: residues 846–862 (PCPPVTQSPLHPTPPPA) and 874–887 (PTPPGMTPPQPAAP). Over residues 894 to 906 (VSSGQTPTPTPGS) the composition is skewed to polar residues. Composition is skewed to low complexity over residues 909 to 930 (SAAQTQSTPTVQAAAQAQVTPQ) and 938 to 957 (PSVATPQSSQQQPTPVHTQP). Residues 974 to 989 (PTPSSVTSAETSSQQP) are compositionally biased toward polar residues. K999 is covalently cross-linked (Glycyl lysine isopeptide (Lys-Gly) (interchain with G-Cter in SUMO1)). Over residues 1012-1022 (AESKGEPRSEM) the composition is skewed to basic and acidic residues. The residue at position 1015 (K1015) is an N6-acetyllysine. S1031 is subject to Phosphoserine. The segment covering 1033 to 1060 (VKEETDTTEQKSEPMEVEEKKPEVKVEA) has biased composition (basic and acidic residues). Glycyl lysine isopeptide (Lys-Gly) (interchain with G-Cter in SUMO1) cross-links involve residues K1034 and K1057. Residues 1067–1080 (SANGTASQSTSPSQ) show a composition bias toward polar residues. Phosphoserine is present on S1077. The 108-residue stretch at 1086 to 1193 (FKPEELRQAL…EVFEQEIDPV (108 aa)) folds into the Bromo domain. An interaction with histone region spans residues 1125 to 1171 (DYFDIVKNPMDLSTIKRKLDTGQYQEPWQYVDDVWLMFNNAWLYNRK). Positions 1163-1181 (NNAWLYNRKTSRVYKFCSK) are interaction with ASF1A. K1217 carries the post-translational modification N6-acetyllysine. In terms of domain architecture, CBP/p300-type HAT spans 1324-1701 (KFSAKRLQTT…MLVELHTQGQ (378 aa)). Phosphoserine; by IKKA is present on residues S1383 and S1387. The interaction with histone stretch occupies residues 1434–1436 (YLD). Acetyl-CoA contacts are provided by residues 1435–1437 (LDS), 1447–1448 (RT), I1494, R1499, and W1503. Positions 1548–1575 (NVLEESIKELEQEEEERKKEESTAASET) form a coiled coil. The segment covering 1557 to 1569 (LEQEEEERKKEES) has biased composition (basic and acidic residues). A disordered region spans residues 1557–1616 (LEQEEEERKKEESTAASETPEGSQGDSKNAKKKNNKKTNKNKSSISRANKKKPSMPNVSN). N6-acetyllysine occurs at positions 1584, 1592, 1593, 1596, and 1598. The span at 1586-1596 (AKKKNNKKTNK) shows a compositional bias: basic residues. The ZZ-type zinc finger occupies 1703–1751 (RFVYTCNECKHHVETRWHCTVCEDYDLCINCYNTKSHTHKMVKWGLGLD). The Zn(2+) site is built by C1708, C1711, C1721, C1724, C1730, C1733, H1739, and H1741. N6-acetyllysine occurs at positions 1742 and 1745. S1764 is subject to Phosphoserine. The TAZ-type 2 zinc finger occupies 1766 to 1847 (QESRRLSIQR…KCPVPFCLNI (82 aa)). The disordered stretch occupies residues 1875 to 1960 (TRNVPQQSLP…QPPPAAVEAA (86 aa)). 2 stretches are compositionally biased toward pro residues: residues 1901 to 1913 (PQTPQPPAQPQPS) and 1944 to 1955 (PAPPPPAQPPPA). S2064, S2077, and S2080 each carry phosphoserine. A disordered region spans residues 2112-2421 (NQPGMQPQPG…LNTPNRSALS (310 aa)). Low complexity-rich tracts occupy residues 2113–2138 (QPGMQPQPGLQSQPGMQPQPGMHQQP), 2197–2217 (QLLQHQQQQQQQQQQQQQQQQ), 2261–2280 (MGQMAAPMGQLGQMGQPGLG), and 2287–2305 (IQQALQQRILQQQQMKQQI). Composition is skewed to polar residues over residues 2315–2327 (SPQQHMLSGQPQA) and 2334–2343 (QIATSLSNQV). Positions 2349-2372 (VQSPRPQSQPPHSSPSPRIQPQPS) are enriched in pro residues. At S2351 the chain carries Phosphoserine. Positions 2411 to 2421 (QLNTPNRSALS) are enriched in polar residues.

As to quaternary structure, part of a complex composed of MSX3, CREBBP/CBP AND EP300/p300; the interaction with MSX3 decreases histone acetylation activity. Found in a complex containing NCOA2; NCOA3; IKKA; IKKB and IKBKG. Probably part of a complex with HIF1A and EP300. Interacts with phosphorylated CREB1. Interacts with the C-terminal region of CITED4. The TAZ-type 1 domain interacts with HIF1A. Interacts with SRCAP, CARM1, ELF3, MLLT7/FOXO4, N4BP2, NCOA1, NCOA3, NCOA6, PCAF, DDX5, DDX17, PELP1, PML, SMAD1, SMAD2, SMAD3, SPIB, TRERF1 and ZCCHC12. Interacts with KLF1; the interaction results in acetylation and enhancement of transcriptional activity of KLF1. Interacts with DAXX; the interaction is dependent on CBP sumoylation and results in suppression of the transcriptional activity via recruitment of HDAC2 to DAXX. Interacts with MAF. Interacts with MTDH. Interacts with MAFG; the interaction acetylates MAFG in the basic region and stimulates NFE2 transcriptional activity through increasing its DNA-binding activity. Interacts with IRF2; the interaction acetylates IRF2 and regulates its activity on the H4 promoter. Interacts (via N-terminus) with SS18L1/CREST (via C-terminus). Interacts with IRF3 (when phosphorylated); forming the dsRNA-activated factor 1 (DRAF1), a complex which activates the transcription of the type I interferon genes. Interacts with MECOM. Interacts with CITED1 (via C-terminus) Interacts with GATA1; the interaction results in acetylation and enhancement of transcriptional activity of GATA1. Interacts with FOXO1; the interaction acetylates FOXO1 and inhibits its transcriptional activity. Interacts with NPAS2, CLOCK and BMAL1. Interacts with ASF1A and ASF1B; this promotes histone acetylation. Interacts with acetylated TP53/p53 and with the acetylated histones H3 and H4. Interacts (via transactivation domain and C-terminus) with PCNA; the interaction occurs on chromatin in UV-irradiated damaged cells. Interacts with DHX9 (via N-terminus); this interaction mediates association with RNA polymerase II holoenzyme and stimulates CREB-dependent transcriptional activation. Interacts with SMAD4; negatively regulated by ZBTB7A. Forms a complex with KMT2A and CREB1. Interacts with DDX3X; this interaction may facilitate HNF4A acetylation. Interacts with MSX1; the interaction may inhibit MSX1 autoinactivation. Interacts with MSX3. Interacts with ACSS2. Post-translationally, methylation of the KIX domain by CARM1 blocks association with CREB. This results in the blockade of CREB signaling, and in activation of apoptotic response. In terms of processing, phosphorylated by CHUK/IKKA at Ser-1383 and Ser-1387; these phosphorylations promote cell growth by switching the binding preference of CREBBP from TP53 to NF-kappa-B. Sumoylation negatively regulates transcriptional activity via the recruitment of DAAX. Post-translationally, autoacetylation is required for binding to protein substrates, such as acetylated histones and acetylated TP53/p53. Autoacetylation is induced by glucose and fatty acids. Expressed in hypothalamus and cortex.

The protein resides in the cytoplasm. The protein localises to the nucleus. It carries out the reaction L-lysyl-[histone] + acetyl-CoA = N(6)-acetyl-L-lysyl-[histone] + CoA + H(+). It catalyses the reaction L-lysyl-[protein] + acetyl-CoA = N(6)-acetyl-L-lysyl-[protein] + CoA + H(+). The catalysed reaction is (S)-lactoyl-CoA + L-lysyl-[protein] = N(6)-[(S)-lactoyl]-L-lysyl-[protein] + CoA + H(+). Functionally, acetylates histones, giving a specific tag for transcriptional activation. Mediates acetylation of histone H3 at 'Lys-18' and 'Lys-27' (H3K18ac and H3K27ac, respectively). Also acetylates non-histone proteins, like DDX21, FBL, IRF2, MAFG, NCOA3, POLR1E/PAF53 and FOXO1. Binds specifically to phosphorylated CREB and enhances its transcriptional activity toward cAMP-responsive genes. Acts as a coactivator of ALX1. Acts as a circadian transcriptional coactivator which enhances the activity of the circadian transcriptional activators: NPAS2-BMAL1 and CLOCK-BMAL1 heterodimers. Acetylates PCNA; acetylation promotes removal of chromatin-bound PCNA and its degradation during nucleotide excision repair (NER). Acetylates POLR1E/PAF53, leading to decreased association of RNA polymerase I with the rDNA promoter region and coding region. Acetylates DDX21, thereby inhibiting DDX21 helicase activity. Acetylates FBL, preventing methylation of 'Gln-105' of histone H2A (H2AQ104me). In addition to protein acetyltransferase, can use different acyl-CoA substrates, such as lactoyl-CoA, and is able to mediate protein lactylation. Catalyzes lactylation of MRE11 in response to DNA damage, thereby promoting DNA double-strand breaks (DSBs) via homologous recombination (HR). Functions as a transcriptional coactivator for SMAD4 in the TGF-beta signaling pathway. This Rattus norvegicus (Rat) protein is Histone lysine acetyltransferase CREBBP (Crebbp).